The following is a 105-amino-acid chain: Replication restart protein PriB (105 aa).

The SSB domain occupies Met1–Asp102.

This sequence belongs to the PriB family. In terms of assembly, homodimer. Interacts with PriA and DnaT. Component of the replication restart primosome. Primosome assembly occurs via a 'hand-off' mechanism. PriA binds to replication forks, subsequently PriB then DnaT bind; DnaT then displaces ssDNA to generate the helicase loading substrate.

In terms of biological role, involved in the restart of stalled replication forks, which reloads the replicative helicase on sites other than the origin of replication; the PriA-PriB pathway is the major replication restart pathway. During primosome assembly it facilitates complex formation between PriA and DnaT on DNA; stabilizes PriA on DNA. Stimulates the DNA unwinding activity of PriA helicase. The chain is Replication restart protein PriB from Photorhabdus laumondii subsp. laumondii (strain DSM 15139 / CIP 105565 / TT01) (Photorhabdus luminescens subsp. laumondii).